The primary structure comprises 588 residues: Aspartate--tRNA ligase (588 aa).

Position 177 (Glu-177) interacts with L-aspartate. The tract at residues Gln-201–Lys-204 is aspartate. Arg-223 is an L-aspartate binding site. Residues Arg-223 to Glu-225 and Gln-232 each bind ATP. His-451 contacts L-aspartate. Glu-485 provides a ligand contact to ATP. Arg-492 contributes to the L-aspartate binding site. ATP is bound at residue Gly-537–Arg-540.

It belongs to the class-II aminoacyl-tRNA synthetase family. Type 1 subfamily. In terms of assembly, homodimer.

It is found in the cytoplasm. The catalysed reaction is tRNA(Asp) + L-aspartate + ATP = L-aspartyl-tRNA(Asp) + AMP + diphosphate. Functionally, catalyzes the attachment of L-aspartate to tRNA(Asp) in a two-step reaction: L-aspartate is first activated by ATP to form Asp-AMP and then transferred to the acceptor end of tRNA(Asp). This chain is Aspartate--tRNA ligase, found in Staphylococcus aureus (strain NCTC 8325 / PS 47).